The chain runs to 148 residues: UPF0260 protein ESA_01462 (148 aa).

It belongs to the UPF0260 family.

The protein is UPF0260 protein ESA_01462 of Cronobacter sakazakii (strain ATCC BAA-894) (Enterobacter sakazakii).